A 528-amino-acid polypeptide reads, in one-letter code: Capsule biosynthesis protein CapD proenzyme (528 aa).

A signal peptide spans 1-26 (MNSFKWGKKIILFCLIVSLMGGIGVS). Thr352 serves as the catalytic Nucleophile. Residues Thr352, 429–432 (GGNR), and Arg520 each bind poly-gamma-D-glutamate.

The protein belongs to the gamma-glutamyltransferase family. This enzyme consists of two polypeptide chains, which are synthesized in precursor form from a single polypeptide. Post-translationally, cleaved by autocatalysis into a large and a small subunit.

Its pathway is capsule biogenesis; capsule polysaccharide biosynthesis. Its function is as follows. Transpeptidase that cleaves the poly-gamma-D-glutamate capsule and catalyzes the formation of an amide bond with the side-chain amino group of meso-diaminopimelic acid (m-DAP) in the peptidoglycan scaffold. Degradation of the high-molecular weight capsule (H-capsule) to the lower-molecular weight capsule (L-capsule), which is released from the bacterial cell surface. The production of L-capsule is essential to mediate escape from host defenses. The protein is Capsule biosynthesis protein CapD proenzyme (capD) of Bacillus anthracis.